The primary structure comprises 165 residues: Putative type II restriction enzyme and methyltransferase RM.MpnORF109P N-terminus (165 aa).

In terms of biological role, corresponds to the N-terminus of a putative G subtype type II restriction/methylase subunit. The polypeptide is Putative type II restriction enzyme and methyltransferase RM.MpnORF109P N-terminus (Mycoplasma pneumoniae (strain ATCC 29342 / M129 / Subtype 1) (Mycoplasmoides pneumoniae)).